A 323-amino-acid polypeptide reads, in one-letter code: Phosphoribosylaminoimidazole-succinocarboxamide synthase (323 aa).

This sequence belongs to the SAICAR synthetase family.

It carries out the reaction 5-amino-1-(5-phospho-D-ribosyl)imidazole-4-carboxylate + L-aspartate + ATP = (2S)-2-[5-amino-1-(5-phospho-beta-D-ribosyl)imidazole-4-carboxamido]succinate + ADP + phosphate + 2 H(+). It participates in purine metabolism; IMP biosynthesis via de novo pathway; 5-amino-1-(5-phospho-D-ribosyl)imidazole-4-carboxamide from 5-amino-1-(5-phospho-D-ribosyl)imidazole-4-carboxylate: step 1/2. This is Phosphoribosylaminoimidazole-succinocarboxamide synthase from Azobacteroides pseudotrichonymphae genomovar. CFP2.